Here is a 98-residue protein sequence, read N- to C-terminus: MSTLQQSASGKKDGDIRYLTPLNIDTNKTKKYCRFKKSGIKYIDYKDADFLLKFVNEQGKILPRRLTGTSLKYQRKVSVAVKRARHLAFMPYVADLLK.

It belongs to the bacterial ribosomal protein bS18 family. As to quaternary structure, part of the 30S ribosomal subunit. Forms a tight heterodimer with protein bS6.

Its function is as follows. Binds as a heterodimer with protein bS6 to the central domain of the 16S rRNA, where it helps stabilize the platform of the 30S subunit. In Flavobacterium psychrophilum (strain ATCC 49511 / DSM 21280 / CIP 103535 / JIP02/86), this protein is Small ribosomal subunit protein bS18.